The sequence spans 195 residues: UPF0157 protein BH1888 (195 aa).

A compositionally biased stretch (polar residues) spans 1-12 (MPPMKDSSNSTP). Residues 1–21 (MPPMKDSSNSTPRTDEELQEV) form a disordered region.

Belongs to the UPF0157 (GrpB) family.

The polypeptide is UPF0157 protein BH1888 (Halalkalibacterium halodurans (strain ATCC BAA-125 / DSM 18197 / FERM 7344 / JCM 9153 / C-125) (Bacillus halodurans)).